Reading from the N-terminus, the 50-residue chain is Single-stranded DNA-binding protein (50 aa).

In terms of assembly, homodimer in the absence of DNA, monomer when binding DNA.

Binds preferentially to single-stranded DNA and therefore, destabilizes double-stranded DNA. It is involved in DNA replication, repair and recombination. Binds ss-DNA as the replication fork advances and stimulates the replisome processivity and accuracy. This is Single-stranded DNA-binding protein (32) from Escherichia coli (Bacteriophage RB15).